The chain runs to 266 residues: 4-hydroxy-tetrahydrodipicolinate reductase (266 aa).

10 to 15 lines the NAD(+) pocket; it reads GPRGRM. Residue K38 coordinates NADP(+). NAD(+) contacts are provided by residues 99–101 and 125–128; these read GTT and APNF. Catalysis depends on H155, which acts as the Proton donor/acceptor. H156 is a (S)-2,3,4,5-tetrahydrodipicolinate binding site. K159 serves as the catalytic Proton donor. 165 to 166 is a (S)-2,3,4,5-tetrahydrodipicolinate binding site; the sequence is GT.

This sequence belongs to the DapB family.

It localises to the cytoplasm. It catalyses the reaction (S)-2,3,4,5-tetrahydrodipicolinate + NAD(+) + H2O = (2S,4S)-4-hydroxy-2,3,4,5-tetrahydrodipicolinate + NADH + H(+). The catalysed reaction is (S)-2,3,4,5-tetrahydrodipicolinate + NADP(+) + H2O = (2S,4S)-4-hydroxy-2,3,4,5-tetrahydrodipicolinate + NADPH + H(+). It participates in amino-acid biosynthesis; L-lysine biosynthesis via DAP pathway; (S)-tetrahydrodipicolinate from L-aspartate: step 4/4. Its function is as follows. Catalyzes the conversion of 4-hydroxy-tetrahydrodipicolinate (HTPA) to tetrahydrodipicolinate. This Bacillus cereus (strain ATCC 10987 / NRS 248) protein is 4-hydroxy-tetrahydrodipicolinate reductase.